Consider the following 153-residue polypeptide: Calmodulin-like protein 4 (153 aa).

4 consecutive EF-hand domains span residues 8–43 (DQIN…LGAS), 44–79 (PTPG…QIKQ), 81–116 (DPKK…LGEK), and 117–152 (LTHK…PVRD).

This sequence belongs to the calmodulin family. As to quaternary structure, interacts with MYO7B; the interaction mediates the association of CALML4 with the IMAC/intermicrovillar adhesion complex. Interacts with MYO7A. Expressed in the small intestine, in both mature enterocytes on the villus surface and immature cells that reside in the crypt stem-cell niche.

The protein resides in the cell projection. The protein localises to the microvillus. Its function is as follows. As part of the intermicrovillar adhesion complex/IMAC plays a role in epithelial brush border differentiation, controlling microvilli organization and length. Acts as a light chain for MYO7B and is required for efficient targeting of the IMAC to the tips of border brush microvilli. This Mus musculus (Mouse) protein is Calmodulin-like protein 4 (Calml4).